We begin with the raw amino-acid sequence, 101 residues long: Large ribosomal subunit protein eL21 (101 aa).

Positions 1–18 are enriched in basic residues; it reads MVKHSRGYRTRSRSLLRK. The disordered stretch occupies residues 1 to 23; that stretch reads MVKHSRGYRTRSRSLLRKSPRER.

The protein belongs to the eukaryotic ribosomal protein eL21 family.

This is Large ribosomal subunit protein eL21 from Saccharolobus islandicus (strain Y.N.15.51 / Yellowstone #2) (Sulfolobus islandicus).